Consider the following 352-residue polypeptide: Ketoisovalerate oxidoreductase subunit VorB (352 aa).

As to quaternary structure, heterotrimer of the VorA, VorB and VorC subunits.

It carries out the reaction 3-methyl-2-oxobutanoate + 2 oxidized [2Fe-2S]-[ferredoxin] + CoA = 2-methylpropanoyl-CoA + 2 reduced [2Fe-2S]-[ferredoxin] + CO2 + H(+). This chain is Ketoisovalerate oxidoreductase subunit VorB (vorB), found in Methanothermobacter marburgensis (strain ATCC BAA-927 / DSM 2133 / JCM 14651 / NBRC 100331 / OCM 82 / Marburg) (Methanobacterium thermoautotrophicum).